A 64-amino-acid polypeptide reads, in one-letter code: Large ribosomal subunit protein bL35 (64 aa).

The disordered stretch occupies residues M1–K21. The segment covering A10–K21 has biased composition (basic residues).

This sequence belongs to the bacterial ribosomal protein bL35 family.

This chain is Large ribosomal subunit protein bL35, found in Nautilia profundicola (strain ATCC BAA-1463 / DSM 18972 / AmH).